The sequence spans 676 residues: Rho guanine nucleotide exchange factor 37 (676 aa).

The segment at M1–K26 is disordered. One can recognise a DH domain in the interval H30–Y213. Residues L254–D455 enclose the BAR domain. 2 consecutive SH3 domains span residues G506–P569 and P603–S666. Disordered stretches follow at residues H568–T601 and P657–S676.

Functionally, may act as a guanine nucleotide exchange factor (GEF). The polypeptide is Rho guanine nucleotide exchange factor 37 (Arhgef37) (Rattus norvegicus (Rat)).